A 436-amino-acid polypeptide reads, in one-letter code: Proteasome-activating nucleotidase (436 aa).

Residues 15 to 97 (EELCRLYRSL…LKSESEQLRS (83 aa)) adopt a coiled-coil conformation. ATP is bound by residues 222–227 (GTGKTL) and His361. The segment at 434–436 (MFA) is docks into pockets in the proteasome alpha-ring to cause gate opening.

It belongs to the AAA ATPase family. As to quaternary structure, homohexamer. The hexameric complex has a two-ring architecture resembling a top hat that caps the 20S proteasome core at one or both ends. Upon ATP-binding, the C-terminus of PAN interacts with the alpha-rings of the proteasome core by binding to the intersubunit pockets.

The protein resides in the cytoplasm. Its function is as follows. ATPase which is responsible for recognizing, binding, unfolding and translocation of substrate proteins into the archaeal 20S proteasome core particle. Is essential for opening the gate of the 20S proteasome via an interaction with its C-terminus, thereby allowing substrate entry and access to the site of proteolysis. Thus, the C-termini of the proteasomal ATPase function like a 'key in a lock' to induce gate opening and therefore regulate proteolysis. Unfolding activity requires energy from ATP hydrolysis, whereas ATP binding alone promotes ATPase-20S proteasome association which triggers gate opening, and supports translocation of unfolded substrates. This chain is Proteasome-activating nucleotidase, found in Methanoregula boonei (strain DSM 21154 / JCM 14090 / 6A8).